A 129-amino-acid chain; its full sequence is Small ribosomal subunit protein uS11 (129 aa).

Belongs to the universal ribosomal protein uS11 family. In terms of assembly, part of the 30S ribosomal subunit. Interacts with proteins S7 and S18. Binds to IF-3.

In terms of biological role, located on the platform of the 30S subunit, it bridges several disparate RNA helices of the 16S rRNA. Forms part of the Shine-Dalgarno cleft in the 70S ribosome. This Stenotrophomonas maltophilia (strain R551-3) protein is Small ribosomal subunit protein uS11.